A 219-amino-acid polypeptide reads, in one-letter code: MASVTDGKTGVKDASDQNFDYMFKLLIIGNSSVGKTSFLFRYADDTFTPAFVSTVGIDFKVKTVYRHEKRVKLQIWDTAGQERYRTITTAYYRGAMGFILMYDITNEESFNAVQDWATQIKTYSWDNAQVILVGNKCDMEEERVVPTEKGRLLAEQLGFDFFEASAKENISVRQAFERLVDAICDKMSDSLDTDPSVLGASKTTRLSDTPPLLQQNCSC.

A2 carries the post-translational modification N-acetylalanine. Residues S31, S32, V33, G34, K35, T36, S37, P49, and S53 each contribute to the GTP site. T36 serves as a coordination point for Mg(2+). A Switch 1 motif is present at residues D45 to D58. Mg(2+)-binding residues include T54 and D77. Residues T78 to M96 carry the Switch 2 motif. G80 serves as a coordination point for GTP. The residue at position 86 (T86) is a Phosphothreonine. GTP contacts are provided by N135, K136, D138, A166, and K167. S188 and S190 each carry phosphoserine. Residues C217 and C219 are each lipidated (S-geranylgeranyl cysteine). Residue C219 is modified to Cysteine methyl ester.

It belongs to the small GTPase superfamily. Rab family. In terms of assembly, interacts with RIMS1, RIMS2, RPH3A and RPH3AL. The GTP-bound form interacts with GAS8/DRC4 (via coiled-coil domains). Interacts with GDI2, CHM and CHML; phosphorylation at Thr-86 disrupts these interactions. Interacts with MADD (via uDENN domain); the GTP-bound form is preferred for interaction. Mg(2+) is required as a cofactor. Phosphorylation of Thr-86 in the switch II region by LRRK2 prevents the association of RAB regulatory proteins, including CHM, CHML and RAB GDP dissociation inhibitor GDI2.

The protein localises to the cell membrane. It is found in the golgi apparatus. The catalysed reaction is GTP + H2O = GDP + phosphate + H(+). Its activity is regulated as follows. Regulated by guanine nucleotide exchange factors (GEFs) which promote the exchange of bound GDP for free GTP. Regulated by GTPase activating proteins (GAPs) which increase the GTP hydrolysis activity. Inhibited by GDP dissociation inhibitors (GDIs) which prevent Rab-GDP dissociation. In terms of biological role, the small GTPases Rab are key regulators of intracellular membrane trafficking, from the formation of transport vesicles to their fusion with membranes. Rabs cycle between an inactive GDP-bound form and an active GTP-bound form that is able to recruit to membranes different sets of downstream effectors directly responsible for vesicle formation, movement, tethering and fusion. The protein is Ras-related protein Rab-3B (RAB3B) of Mesocricetus auratus (Golden hamster).